A 201-amino-acid polypeptide reads, in one-letter code: Ras-related protein Rab-9A (201 aa).

At A2 the chain carries N-acetylalanine. GTP contacts are provided by G17, V18, G19, K20, S21, S22, S34, H38, and T39. A Mg(2+)-binding site is contributed by S21. The short motif at 31 to 42 (KFDSQLFHTIGV) is the Switch 1 element. S34 carries the post-translational modification Phosphoserine. Residues T39 and D62 each coordinate Mg(2+). Residues 64–78 (AGQERFRSLRTPFYR) carry the Switch 2 motif. GTP-binding residues include G65, N124, K125, D127, and K156. A Phosphoserine modification is found at S179. T187 is modified (phosphothreonine). Residues C200 and C201 are each lipidated (S-geranylgeranyl cysteine).

This sequence belongs to the small GTPase superfamily. Rab family. In terms of assembly, interacts (preferentially in its GTP-bound form) with GCC2 (via its GRIP domain). Interacts (GTP-bound form) with SGSM1; the GDP-bound form has much lower affinity for SGSM1. Interacts with SGSM2. The GTP-bound form but not the GDP-bound form interacts with HPS4 and the BLOC-3 complex (heterodimer of HPS1 and HPS4) but does not interact with HPS1 alone. Interacts (GTP-bound form) with NDE1; two RAB9A-GTP molecules lie on the opposite sides of the NDE1 homodimer; the interaction leads to RAB9A-dynein motor tethering. Interacts (GTP-bound form) with NDEL1. Mg(2+) is required as a cofactor.

The protein resides in the cell membrane. Its subcellular location is the endoplasmic reticulum membrane. It localises to the golgi apparatus membrane. It is found in the late endosome. The protein localises to the cytoplasmic vesicle. The protein resides in the phagosome membrane. Its subcellular location is the phagosome. It localises to the cytoplasmic vesicle membrane. It is found in the melanosome. The catalysed reaction is GTP + H2O = GDP + phosphate + H(+). Regulated by guanine nucleotide exchange factors (GEFs) which promote the exchange of bound GDP for free GTP. Regulated by GTPase activating proteins (GAPs) which increase the GTP hydrolysis activity. Inhibited by GDP dissociation inhibitors (GDIs). In terms of biological role, the small GTPases Rab are key regulators of intracellular membrane trafficking, from the formation of transport vesicles to their fusion with membranes. Rabs cycle between an inactive GDP-bound form and an active GTP-bound form that is able to recruit to membranes different sets of downstream effectors directly responsible for vesicle formation, movement, tethering and fusion. RAB9A is involved in the transport of proteins between the endosomes and the trans-Golgi network (TGN). Specifically uses NDE1/NDEL1 as an effector to interact with the dynein motor complex in order to control retrograde trafficking of RAB9-associated late endosomes to the TGN. Involved in the recruitment of SGSM2 to melanosomes and is required for the proper trafficking of melanogenic enzymes TYR, TYRP1 and DCT/TYRP2 to melanosomes in melanocytes. The polypeptide is Ras-related protein Rab-9A (Rattus norvegicus (Rat)).